Consider the following 335-residue polypeptide: Protein FATTY ACID EXPORT 3, chloroplastic (335 aa).

The transit peptide at 1–72 (MMSIPMELMS…PEVLLNRSVV (72 aa)) directs the protein to the chloroplast. A disordered region spans residues 82-101 (GESGVEVGKEKSDIDVEDDT). Basic and acidic residues predominate over residues 88 to 101 (VGKEKSDIDVEDDT). Positions 101-160 (TSKEAWKQTLESFKEQVSKMQSVSSEAYSVNSQKAMTVLKETSEQLRIQAEKAKEELGTK) form a coiled coil. Helical transmembrane passes span 205-225 (FHVGIPYGLLLLVGGFINFMV), 228-248 (SIPAIRFGVILGGALFALSLA), and 286-306 (STFLGFFTTLTSGGVLGFYLY). Positions 316–335 (PTLEDGGEDESSDGFVRSEG) are disordered.

It belongs to the TMEM14 family.

The protein localises to the plastid. The protein resides in the chloroplast membrane. May be involved in free fatty acids export from the plastids. The polypeptide is Protein FATTY ACID EXPORT 3, chloroplastic (Arabidopsis thaliana (Mouse-ear cress)).